A 444-amino-acid polypeptide reads, in one-letter code: UDP-N-acetylmuramate--L-alanine ligase (444 aa).

110–116 lines the ATP pocket; that stretch reads GAHGKTS.

The protein belongs to the MurCDEF family.

The protein resides in the cytoplasm. The enzyme catalyses UDP-N-acetyl-alpha-D-muramate + L-alanine + ATP = UDP-N-acetyl-alpha-D-muramoyl-L-alanine + ADP + phosphate + H(+). Its pathway is cell wall biogenesis; peptidoglycan biosynthesis. In terms of biological role, cell wall formation. In Streptococcus pneumoniae (strain Hungary19A-6), this protein is UDP-N-acetylmuramate--L-alanine ligase.